A 140-amino-acid polypeptide reads, in one-letter code: Gas vesicle protein O (140 aa).

The span at 1–14 (MSDQGNEHANHDGI) shows a compositional bias: basic and acidic residues. Residues 1-61 (MSDQGNEHAN…DSTIGLSDAQ (61 aa)) form a disordered region. Positions 39 to 56 (QTASDEAVSNQSPDSTIG) are enriched in polar residues.

It belongs to the gas vesicle GvpO family. In terms of assembly, forms homodimers, forms a GvpN-GvpO heterodimer, interacts with GvpC, GvpF, GvpI and GvpL, might interact with GvpA.

Its subcellular location is the gas vesicle. The protein localises to the cytoplasm. Its function is as follows. A minor component of the gas vesicle (GV), may play a role in transcription and/or RNA stability and/or in GV assembly. Gas vesicles are small, hollow, gas filled protein structures found in some microorganisms. They allow positioning of halobacteria at the optimal depth for growth in the poorly aerated shallow brine pools of their habitat. Expression of a 9.5 kb mc-vac DNA fragment containing 2 divergently transcribed regions (gvpD-gvpE-gvpF-gvpG-gvpH-gvpI-gvpJ-gvpK-gvpL-gvpM and gvpA-gvpC-gvpN-gvpO) allows H.volcanii to produce gas vesicles. In Haloferax mediterranei (strain ATCC 33500 / DSM 1411 / JCM 8866 / NBRC 14739 / NCIMB 2177 / R-4) (Halobacterium mediterranei), this protein is Gas vesicle protein O.